The sequence spans 582 residues: Formate--tetrahydrofolate ligase (582 aa).

ATP is bound at residue 65-72 (TPLGEGKT).

It belongs to the formate--tetrahydrofolate ligase family.

The catalysed reaction is (6S)-5,6,7,8-tetrahydrofolate + formate + ATP = (6R)-10-formyltetrahydrofolate + ADP + phosphate. Its pathway is one-carbon metabolism; tetrahydrofolate interconversion. The sequence is that of Formate--tetrahydrofolate ligase from Vibrio atlanticus (strain LGP32) (Vibrio splendidus (strain Mel32)).